The following is a 37-amino-acid chain: Cytochrome b6-f complex subunit 5 (37 aa).

Residues 5 to 25 (LLSGIVLGLVPVTIAGLFVTA) traverse the membrane as a helical segment.

The protein belongs to the PetG family. In terms of assembly, the 4 large subunits of the cytochrome b6-f complex are cytochrome b6, subunit IV (17 kDa polypeptide, PetD), cytochrome f and the Rieske protein, while the 4 small subunits are PetG, PetL, PetM and PetN. The complex functions as a dimer.

The protein localises to the plastid. It is found in the chloroplast thylakoid membrane. Its function is as follows. Component of the cytochrome b6-f complex, which mediates electron transfer between photosystem II (PSII) and photosystem I (PSI), cyclic electron flow around PSI, and state transitions. PetG is required for either the stability or assembly of the cytochrome b6-f complex. The protein is Cytochrome b6-f complex subunit 5 of Stigeoclonium helveticum (Green alga).